A 340-amino-acid polypeptide reads, in one-letter code: N-acetyl-gamma-glutamyl-phosphate reductase (340 aa).

The active site involves Cys-146.

This sequence belongs to the NAGSA dehydrogenase family. Type 1 subfamily.

Its subcellular location is the cytoplasm. The catalysed reaction is N-acetyl-L-glutamate 5-semialdehyde + phosphate + NADP(+) = N-acetyl-L-glutamyl 5-phosphate + NADPH + H(+). The protein operates within amino-acid biosynthesis; L-arginine biosynthesis; N(2)-acetyl-L-ornithine from L-glutamate: step 3/4. Catalyzes the NADPH-dependent reduction of N-acetyl-5-glutamyl phosphate to yield N-acetyl-L-glutamate 5-semialdehyde. The sequence is that of N-acetyl-gamma-glutamyl-phosphate reductase from Streptococcus gordonii (strain Challis / ATCC 35105 / BCRC 15272 / CH1 / DL1 / V288).